We begin with the raw amino-acid sequence, 303 residues long: Sulfate adenylyltransferase subunit 2 (303 aa).

The protein belongs to the PAPS reductase family. CysD subfamily. Heterodimer composed of CysD, the smaller subunit, and CysN.

The enzyme catalyses sulfate + ATP + H(+) = adenosine 5'-phosphosulfate + diphosphate. It functions in the pathway sulfur metabolism; hydrogen sulfide biosynthesis; sulfite from sulfate: step 1/3. Functionally, with CysN forms the ATP sulfurylase (ATPS) that catalyzes the adenylation of sulfate producing adenosine 5'-phosphosulfate (APS) and diphosphate, the first enzymatic step in sulfur assimilation pathway. APS synthesis involves the formation of a high-energy phosphoric-sulfuric acid anhydride bond driven by GTP hydrolysis by CysN coupled to ATP hydrolysis by CysD. The chain is Sulfate adenylyltransferase subunit 2 from Bacteroides fragilis (strain YCH46).